A 339-amino-acid polypeptide reads, in one-letter code: Fructose-1,6-bisphosphatase isozyme 2 (339 aa).

The segment at 3 to 10 is important for interaction with ALDOA; the sequence is DRSPFETD. Residues V18 and 28–32 contribute to the AMP site; that span reads TGELT. Mg(2+) contacts are provided by D69 and E98. 113–114 is a binding site for AMP; sequence KY. Mg(2+) contacts are provided by D119, L121, and D122. A substrate-binding site is contributed by D122. An AMP-binding site is contributed by R141. The short motif at 204–208 is the Nuclear localization signal element; it reads KKKGK. Position 213-216 (213-216) interacts with substrate; it reads NEGY. 2 positions are modified to phosphotyrosine: Y216 and Y219. Substrate contacts are provided by residues 245–249, Y265, and K275; that span reads YVGSM. E281 lines the Mg(2+) pocket.

It belongs to the FBPase class 1 family. Homotetramer. Interacts with ALDOA; the interaction blocks inhibition by physiological concentrations of AMP and reduces inhibition by Ca(2+). Interacts with alpha-actinin and F-actin. Mg(2+) is required as a cofactor. Expressed in muscle, intestine, brain and placenta and very weakly in liver.

The protein resides in the cell junction. It is found in the cytoplasm. The protein localises to the nucleus. Its subcellular location is the myofibril. It localises to the sarcomere. The protein resides in the z line. It carries out the reaction beta-D-fructose 1,6-bisphosphate + H2O = beta-D-fructose 6-phosphate + phosphate. The protein operates within carbohydrate biosynthesis; gluconeogenesis. With respect to regulation, subject to complex allosteric regulation. The enzyme can assume an active R-state, or an inactive T-state. Intermediate conformations may exist. AMP acts as an allosteric inhibitor. Fructose 2,6-bisphosphate acts as a competitive inhibitor. Strongly inhibited by Ca(2+). In terms of biological role, catalyzes the hydrolysis of fructose 1,6-bisphosphate to fructose 6-phosphate in the presence of divalent cations and probably participates in glycogen synthesis from carbohydrate precursors, such as lactate. The sequence is that of Fructose-1,6-bisphosphatase isozyme 2 (Fbp2) from Mus musculus (Mouse).